We begin with the raw amino-acid sequence, 345 residues long: 2-oxoglutarate and iron-dependent oxygenase domain-containing protein 2 (345 aa).

The Fe2OG dioxygenase domain maps to 207-301; it reads DSHKAFVVKY…RWNLIIWMRA (95 aa). Fe cation-binding residues include histidine 227, aspartate 229, and histidine 282. Position 292 (arginine 292) interacts with 2-oxoglutarate.

It belongs to the OGFOD2 family. Requires Fe(2+) as cofactor. It depends on L-ascorbate as a cofactor.

In Danio rerio (Zebrafish), this protein is 2-oxoglutarate and iron-dependent oxygenase domain-containing protein 2 (ogfod2).